A 555-amino-acid chain; its full sequence is Protein tyrosine phosphatase-like protein egg-3 (555 aa).

Short sequence motifs (D-box) lie at residues 96–99 (RILL) and 130–133 (RDRL). The Tyrosine-protein phosphatase domain maps to 207–514 (FVQEFNRLDR…LFIYRVILRW (308 aa)). The RXXL motif; required for cortical localization signature appears at 253 to 256 (RVKL). Residues 266 to 269 (RNEL) carry the RXXL motif motif. 2 short sequence motifs (RXXL motif; required for cortical localization) span residues 509-512 (RVIL) and 525-528 (RAAL).

This sequence belongs to the protein-tyrosine phosphatase family. Part of a complex, consisting of pseudophosphatases egg-3, egg-4, egg-5 and kinase mbk-2; this complex is required for the oocyte-to-zygote transition. Interacts (via tyrosine-protein phosphatase domain) with kinase mbk-2 (via N-terminus); the interaction does not affect mbk-2 kinase activity, is enhanced by mbk-2 tyrosine phosphorylation status and requires prior binding of mbk-2 to egg-4 and egg-5. Interacts with egg-4.

The protein resides in the cytoplasm. It is found in the cell cortex. Its function is as follows. Probable pseudophosphatase required for the oocyte-to-zygote transition during which it regulates the polarized dispersal of the cortical actin cytoskeleton, the synthesis of the eggshell chitin layer and the formation of the polar bodies after meiosis I and II. Acts as a scaffold to tether kinase mbk-2 and pseudophosphatases egg-4 and egg-5 to the oocyte cortex and thus restricts mbk-2 activity to the cortex during meiosis I. Regulates mbk-2 localization to cytoplasmic foci during meiosis II. Also required for chitin synthase chs-1 localization to the cell cortex of unfertilized oocytes and to cytoplasmic foci in the fertilized embryo. This chain is Protein tyrosine phosphatase-like protein egg-3, found in Caenorhabditis elegans.